The following is a 188-amino-acid chain: Diphosphoinositol polyphosphate phosphohydrolase DDP1 (188 aa).

Basic and acidic residues predominate over residues 1–21 (MGKTADNHGPVRSETAREGRE). Residues 1–23 (MGKTADNHGPVRSETAREGRENQ) are disordered. The 150-residue stretch at 30-179 (GARLVAGCIC…KRPELLEALN (150 aa)) folds into the Nudix hydrolase domain. 1D-myo-inositol hexakisphosphate is bound by residues R32, S52, S53, and K63. 4 residues coordinate 5-diphospho-1D-myo-inositol 1,2,3,4,6-pentakisphosphate: R32, S52, S53, and K63. Residues R32, S52, S53, and K63 each coordinate P(1),P(5)-bis(5'-adenosyl) pentaphosphate. Mg(2+)-binding residues include K63, E80, and E84. The short motif at 65-86 (GVEKDEPNYETTAQRETWEEAG) is the Nudix box element. P(1),P(5)-bis(5'-adenosyl) pentaphosphate is bound at residue D100. R102, R129, R152, and R171 together coordinate 1D-myo-inositol hexakisphosphate. R102 serves as a coordination point for 5-diphospho-1D-myo-inositol 1,2,3,4,6-pentakisphosphate. 5-diphospho-1D-myo-inositol 1,2,3,4,6-pentakisphosphate is bound by residues R152 and R171. The P(1),P(5)-bis(5'-adenosyl) pentaphosphate site is built by R152, R171, and E173.

Belongs to the Nudix hydrolase family. DIPP subfamily. Requires Mg(2+) as cofactor. Mn(2+) is required as a cofactor. It depends on Zn(2+) as a cofactor.

The protein resides in the cytoplasm. Its subcellular location is the nucleus. The catalysed reaction is diphospho-myo-inositol polyphosphate + H2O = myo-inositol polyphosphate + phosphate.. The enzyme catalyses P(1),P(6)-bis(5'-adenosyl) hexaphosphate + H2O = adenosine 5'-pentaphosphate + AMP + 2 H(+). It carries out the reaction P(1),P(5)-bis(5'-adenosyl) pentaphosphate + H2O = adenosine 5'-tetraphosphate + AMP + 2 H(+). It catalyses the reaction [phosphate](n+1) + n H2O = (n+1) phosphate + n H(+). Its function is as follows. May eliminate potentially toxic dinucleoside polyphosphates during sporulation. Most active against diadenosine 5',5'''-P1,P6-hexaphosphate (Ap6A). Can also hydrolyze diadenosine 5',5'''-P1,P5-pentaphosphate (Ap5A), adenosine 5'-pentaphosphate (p5A), and adenosine 5'-tetraphosphate (p4A) are also substrates, but not diadenosine 5',5'''-P1,P4-tetraphosphate (Ap4A) or other dinucleotides, mononucleotides, nucleotide sugars, or nucleotide alcohols. Also cleaves a beta-phosphate from the diphosphate groups in PP-InsP5 (diphosphoinositol pentakisphosphate) and [PP]2-InsP4 (bisdiphosphoinositol tetrakisphosphate). Also has endopolyphosphatase activity. This is Diphosphoinositol polyphosphate phosphohydrolase DDP1 (DDP1) from Saccharomyces cerevisiae (strain ATCC 204508 / S288c) (Baker's yeast).